Reading from the N-terminus, the 116-residue chain is Immunoglobulin heavy variable 3-13 (116 aa).

Positions 1–19 (MELGLSWVFLVAILEGVQC) are cleaved as a signal peptide. The segment at 20–44 (EVQLVESGGGLVQPGGSLRLSCAAS) is framework-1. In terms of domain architecture, Ig-like spans 20 to 116 (EVQLVESGGG…GDTAVYYCAR (97 aa)). Cysteine 41 and cysteine 114 are disulfide-bonded. The complementarity-determining-1 stretch occupies residues 45 to 52 (GFTFSSYD). A framework-2 region spans residues 53–69 (MHWVRQATGKGLEWVSA). Residues 70–76 (IGTAGDP) form a complementarity-determining-2 region. The segment at 77–114 (YYPGSVKGRFTISRENAKNSLYLQMNSLRAGDTAVYYC) is framework-3. Positions 115–116 (AR) are complementarity-determining-3.

Immunoglobulins are composed of two identical heavy chains and two identical light chains; disulfide-linked.

The protein localises to the secreted. The protein resides in the cell membrane. In terms of biological role, v region of the variable domain of immunoglobulin heavy chains that participates in the antigen recognition. Immunoglobulins, also known as antibodies, are membrane-bound or secreted glycoproteins produced by B lymphocytes. In the recognition phase of humoral immunity, the membrane-bound immunoglobulins serve as receptors which, upon binding of a specific antigen, trigger the clonal expansion and differentiation of B lymphocytes into immunoglobulins-secreting plasma cells. Secreted immunoglobulins mediate the effector phase of humoral immunity, which results in the elimination of bound antigens. The antigen binding site is formed by the variable domain of one heavy chain, together with that of its associated light chain. Thus, each immunoglobulin has two antigen binding sites with remarkable affinity for a particular antigen. The variable domains are assembled by a process called V-(D)-J rearrangement and can then be subjected to somatic hypermutations which, after exposure to antigen and selection, allow affinity maturation for a particular antigen. The polypeptide is Immunoglobulin heavy variable 3-13 (Homo sapiens (Human)).